A 102-amino-acid polypeptide reads, in one-letter code: Large ribosomal subunit protein uL24 (102 aa).

The protein belongs to the universal ribosomal protein uL24 family. In terms of assembly, part of the 50S ribosomal subunit.

Functionally, one of two assembly initiator proteins, it binds directly to the 5'-end of the 23S rRNA, where it nucleates assembly of the 50S subunit. In terms of biological role, one of the proteins that surrounds the polypeptide exit tunnel on the outside of the subunit. The polypeptide is Large ribosomal subunit protein uL24 (Cupriavidus pinatubonensis (strain JMP 134 / LMG 1197) (Cupriavidus necator (strain JMP 134))).